Consider the following 422-residue polypeptide: Probable protein phosphatase 2C 69 (422 aa).

One can recognise a PPM-type phosphatase domain in the interval 45–294 (TLLLAEAGER…DDTTCIVVDI (250 aa)). Mn(2+)-binding residues include Asp-70, Gly-71, Asp-246, and Asp-285.

The protein belongs to the PP2C family. The cofactor is Mg(2+). It depends on Mn(2+) as a cofactor.

It catalyses the reaction O-phospho-L-seryl-[protein] + H2O = L-seryl-[protein] + phosphate. It carries out the reaction O-phospho-L-threonyl-[protein] + H2O = L-threonyl-[protein] + phosphate. This chain is Probable protein phosphatase 2C 69, found in Oryza sativa subsp. japonica (Rice).